The sequence spans 213 residues: Octanoyltransferase (213 aa).

One can recognise a BPL/LPL catalytic domain in the interval 28–203; the sequence is GTSPETLLLL…RFPFLLDERL (176 aa). Substrate-binding positions include 66 to 73, 133 to 135, and 146 to 148; these read RGGDVTFH, SIG, and GFA. Catalysis depends on cysteine 164, which acts as the Acyl-thioester intermediate.

The protein belongs to the LipB family.

Its subcellular location is the cytoplasm. It catalyses the reaction octanoyl-[ACP] + L-lysyl-[protein] = N(6)-octanoyl-L-lysyl-[protein] + holo-[ACP] + H(+). It participates in protein modification; protein lipoylation via endogenous pathway; protein N(6)-(lipoyl)lysine from octanoyl-[acyl-carrier-protein]: step 1/2. Its function is as follows. Catalyzes the transfer of endogenously produced octanoic acid from octanoyl-acyl-carrier-protein onto the lipoyl domains of lipoate-dependent enzymes. Lipoyl-ACP can also act as a substrate although octanoyl-ACP is likely to be the physiological substrate. The polypeptide is Octanoyltransferase (Geobacter metallireducens (strain ATCC 53774 / DSM 7210 / GS-15)).